Reading from the N-terminus, the 518-residue chain is GMP synthase [glutamine-hydrolyzing] (518 aa).

One can recognise a Glutamine amidotransferase type-1 domain in the interval lysine 13–aspartate 203. The active-site Nucleophile is cysteine 90. Active-site residues include histidine 177 and glutamate 179. The GMPS ATP-PPase domain maps to tryptophan 204 to arginine 393. Position 231–237 (serine 231–serine 237) interacts with ATP.

Homodimer.

The enzyme catalyses XMP + L-glutamine + ATP + H2O = GMP + L-glutamate + AMP + diphosphate + 2 H(+). It functions in the pathway purine metabolism; GMP biosynthesis; GMP from XMP (L-Gln route): step 1/1. Its function is as follows. Catalyzes the synthesis of GMP from XMP. The protein is GMP synthase [glutamine-hydrolyzing] of Listeria monocytogenes serovar 1/2a (strain ATCC BAA-679 / EGD-e).